The chain runs to 1323 residues: Traf2 and NCK-interacting protein kinase (1323 aa).

A Protein kinase domain is found at 25–289 (FELVELVGNG…TEQLMKHPFI (265 aa)). ATP contacts are provided by residues 31 to 39 (VGNGTYGQV) and Lys-54. Catalysis depends on Asp-153, which acts as the Proton acceptor. Residue Thr-187 is modified to Phosphothreonine. 3 disordered regions span residues 284-347 (MKHP…LPGE), 397-559 (EQKE…LRPV), and 571-838 (SQGP…NEQY). The segment covering 288–307 (FIRDQPNERQVRIQLKDHID) has biased composition (basic and acidic residues). Residues 290–1010 (RDQPNERQVR…EIRKYKKRFN (721 aa)) form a mediates interaction with NEDD4 region. Positions 317-335 (DETEYEYSGSEEEEEENDS) are enriched in acidic residues. Phosphoserine is present on residues Ser-324 and Ser-326. 3 stretches are compositionally biased toward basic and acidic residues: residues 397–470 (EQKE…ERDY), 477–494 (QRQEQRPLEKKPLYHYKE), and 503–513 (AWAKEVEERSR). Phosphoserine is present on residues Ser-531 and Ser-541. At Thr-552 the chain carries Phosphothreonine. Residues Ser-571, Ser-579, Ser-581, and Ser-611 each carry the phosphoserine modification. Residues 623 to 640 (RIEKFDRSSWLRQEEDIP) show a composition bias toward basic and acidic residues. Phosphoserine is present on residues Ser-649, Ser-651, Ser-659, Ser-672, Ser-678, Ser-691, Ser-735, Ser-737, and Ser-740. Residues 691–726 (SSLQRTSSGSSSSSSTPSSQPSSQGGSQPGSQAGSS) show a composition bias toward low complexity. 2 stretches are compositionally biased toward basic and acidic residues: residues 746-760 (EPSKVKPEESRDITR) and 772-790 (KELRELRIEETNRPLKKVT). Acidic residues predominate over residues 797-810 (EESESSEEEEEDGE). Residue Ser-922 is modified to Phosphoserine. The interval 939–960 (FVDPRVYQTSPTDEDEEDDESS) is disordered. Residues 950 to 959 (TDEDEEDDES) are compositionally biased toward acidic residues. Positions 1010 to 1297 (NSEILCAALW…KFLCERNDKV (288 aa)) constitute a CNH domain.

This sequence belongs to the protein kinase superfamily. STE Ser/Thr protein kinase family. STE20 subfamily. As to quaternary structure, interacts (via the CNH domain) with RAP2A (GTP-bound form preferentially); the interaction is direct and required for the activation of TNIK by RAP2A. Interacts with NEDD4; recruits RAP2A to NEDD4. Interacts with TRAF2 and NCK. Interacts with TCF7L2/TCF4 and CTNNB1; the interaction is direct. Interacts with TANC1. Post-translationally, autophosphorylated. Autophosphorylation is activated by RAP2A and induces association to the cytoskeletal fraction.

It is found in the nucleus. It localises to the cytoplasm. The protein localises to the recycling endosome. The protein resides in the cytoskeleton. The enzyme catalyses L-seryl-[protein] + ATP = O-phospho-L-seryl-[protein] + ADP + H(+). It catalyses the reaction L-threonyl-[protein] + ATP = O-phospho-L-threonyl-[protein] + ADP + H(+). In terms of biological role, serine/threonine kinase that acts as an essential activator of the Wnt signaling pathway. Recruited to promoters of Wnt target genes and required to activate their expression. May act by phosphorylating TCF4/TCF7L2. Appears to act upstream of the JUN N-terminal pathway. May play a role in the response to environmental stress. Part of a signaling complex composed of NEDD4, RAP2A and TNIK which regulates neuronal dendrite extension and arborization during development. More generally, it may play a role in cytoskeletal rearrangements and regulate cell spreading. Phosphorylates SMAD1 on Thr-322. Activator of the Hippo signaling pathway which plays a pivotal role in organ size control and tumor suppression by restricting proliferation and promoting apoptosis. MAP4Ks act in parallel to and are partially redundant with STK3/MST2 and STK4/MST2 in the phosphorylation and activation of LATS1/2, and establish MAP4Ks as components of the expanded Hippo pathway. This Mus musculus (Mouse) protein is Traf2 and NCK-interacting protein kinase (Tnik).